The following is a 226-amino-acid chain: Beta-phosphoglucomutase (226 aa).

Asp7 (nucleophile) is an active-site residue. Positions 7 and 9 each coordinate Mg(2+). Asp7 bears the 4-aspartylphosphate mark. Asp9 acts as the Proton donor/acceptor in catalysis. Residues Asp9, Gly44, Ile45, Arg47, Ser116, Arg117, and Asn118 each coordinate beta-D-glucose 6-phosphate. Asp170 contributes to the Mg(2+) binding site.

Belongs to the HAD-like hydrolase superfamily. CbbY/CbbZ/Gph/YieH family. Homodimer. It depends on Mg(2+) as a cofactor. Post-translationally, autophosphorylated.

It localises to the cytoplasm. The catalysed reaction is beta-D-glucose 1-phosphate = beta-D-glucose 6-phosphate. Functionally, catalyzes the interconversion of D-glucose 1-phosphate (G1P) and D-glucose 6-phosphate (G6P), forming beta-D-glucose 1,6-(bis)phosphate (beta-G16P) as an intermediate. In Bacillus subtilis (strain 168), this protein is Beta-phosphoglucomutase (yvdM).